The primary structure comprises 145 residues: Putative pre-16S rRNA nuclease (145 aa).

The protein belongs to the YqgF nuclease family.

The protein localises to the cytoplasm. Could be a nuclease involved in processing of the 5'-end of pre-16S rRNA. The protein is Putative pre-16S rRNA nuclease of Pseudomonas fluorescens (strain Pf0-1).